The primary structure comprises 1229 residues: uncharacterized protein (1229 aa).

The first 19 residues, 1 to 19 (MKYFLLLFLLVLSFTLVES), serve as a signal peptide directing secretion. N-linked (GlcNAc...) asparagine glycans are attached at residues asparagine 238, asparagine 270, asparagine 370, asparagine 538, asparagine 691, and asparagine 701. A Galectin 1 domain is found at 678 to 813 (RMVNFANVME…QWNIDTVKMN (136 aa)). Polar residues predominate over residues 818-829 (HTTTVEPSTPLE). The interval 818-903 (HTTTVEPSTP…TLPPTTTPYN (86 aa)) is disordered. Low complexity predominate over residues 830–846 (TASTSQSTPSATLTSTT). A compositionally biased stretch (polar residues) spans 847–869 (ENIPSTSKIPETSTTQRPTSPIL). Positions 870-901 (TSGATSTSSSTESTTTSPTTSTTTTLPPTTTP) are enriched in low complexity. Asparagine 903, asparagine 938, and asparagine 948 each carry an N-linked (GlcNAc...) asparagine glycan. Residues 925–1059 (RPVVFSRYME…ESTIDTVSMA (135 aa)) form the Galectin 2 domain. Residues 1061 to 1087 (VRPPTTPTTTTSTTTTTTPKLTTTSTL) are disordered. A compositionally biased stretch (low complexity) spans 1067–1087 (PTTTTSTTTTTTPKLTTTSTL). N-linked (GlcNAc...) asparagine glycosylation is present at asparagine 1146.

This is an uncharacterized protein from Caenorhabditis elegans.